Reading from the N-terminus, the 500-residue chain is Intracellular exo-alpha-(1-&gt;5)-L-arabinofuranosidase 1 (500 aa).

Glu-27, Asn-72, and Asn-172 together coordinate alpha-L-arabinofuranose. The active-site Proton donor/acceptor is the Glu-173. Tyr-244, Glu-292, and Gln-349 together coordinate alpha-L-arabinofuranose. The active-site Nucleophile is Glu-292.

Belongs to the glycosyl hydrolase 51 family. As to quaternary structure, homohexamer; trimer of dimers.

The protein resides in the cytoplasm. The enzyme catalyses Hydrolysis of terminal non-reducing alpha-L-arabinofuranoside residues in alpha-L-arabinosides.. The catalysed reaction is (20S)-ginsenoside Rc + H2O = L-arabinofuranose + (20S)-ginsenoside Rd. It functions in the pathway glycan metabolism; L-arabinan degradation. With respect to regulation, at a concentration of 5 mM, K(+), Cu(2+) and Ni(2+) exhibit inhibitory effects on the activity. Additionally, the chemical reagent SDS also displays a certain degree of inhibition. Enzymatic activity is largely unaffected by product feedback inhibition. Functionally, involved in the degradation of arabinan and is a key enzyme in the complete degradation of the plant cell wall. Catalyzes the cleavage of terminal alpha-(1-&gt;5)-arabinofuranosyl bonds in different hemicellulosic homopolysaccharides (branched and debranched arabinans). It acts preferentially on arabinotriose, arabinobiose and linear alpha-(1-&gt;5)-L-arabinan, and is much less effective on branched sugar beet arabinan. When expressed in E.coli, the recombinant enyzme can hydrolyze, with relatively low catalytic efficiency, the terminal alpha-L-arabinofuranoside at the C20 position of ginsenoside Rc to produce ginsenoside Rd, a rare ginsenoside that exhibits diverse and powerful pharmacological activities. The polypeptide is Intracellular exo-alpha-(1-&gt;5)-L-arabinofuranosidase 1 (Bacillus subtilis (strain 168)).